The primary structure comprises 770 residues: Low-density lipoprotein receptor-related protein 3 (770 aa).

The first 36 residues, 1–36, serve as a signal peptide directing secretion; it reads MEKRAAAGLEGAPGARAQLAVVCLVNIFLTGRLSSA. Residues 37-496 are Extracellular-facing; that stretch reads VPALAACSGK…HGCLAAVPRK (460 aa). Cystine bridges form between Cys43/Cys72, Cys99/Cys120, Cys166/Cys178, Cys173/Cys191, Cys185/Cys200, Cys212/Cys227, Cys219/Cys240, Cys234/Cys249, and Cys254/Cys282. The CUB 1 domain maps to 43–159; the sequence is CSGKLEQHTE…QGFRLSYIRG (117 aa). Asn71 carries N-linked (GlcNAc...) asparagine glycosylation. 2 LDL-receptor class A domains span residues 165 to 201 and 211 to 250; these read SCQADEFRCDNGKCLPGPWQCNTVDECGDGSDEGNCS and LCPGGTFPCSGARSTRCLPVERRCDGLQDCGDGSDEAGCP. Asn199 is a glycosylation site (N-linked (GlcNAc...) asparagine). The CUB 2 domain maps to 254–365; that stretch reads CGRRLGSFYG…HGFNATYQVK (112 aa). N-linked (GlcNAc...) asparagine glycosylation is present at Asn359. LDL-receptor class A domains follow at residues 415–453 and 454–490; these read ACPPDQYPCEGGSGLCYTPADRCNNQKSCPDGADEKNCF and SCQPGTFHCGTNLCIFETWRCDGQEDCQDGSDEHGCL. 6 disulfides stabilise this stretch: Cys416–Cys430, Cys423–Cys443, Cys437–Cys452, Cys455–Cys467, Cys462–Cys480, and Cys474–Cys489. A helical transmembrane segment spans residues 497–517; the sequence is VITAALIGSLVCGLLLVIALG. Over 518 to 770 the chain is Cytoplasmic; sequence CAFKLYSLRT…ASDDEALLVC (253 aa). The interval 635–770 is disordered; the sequence is LGDGFLQPAP…ASDDEALLVC (136 aa). Positions 689–707 are enriched in basic and acidic residues; sequence RDPECRPVDKDRKVCREPL. The segment covering 729 to 738 has biased composition (polar residues); it reads QVSTASSTLG. The span at 761 to 770 shows a compositional bias: acidic residues; it reads ASDDEALLVC.

The protein belongs to the LDLR family. In terms of assembly, binds GGA1 and GGA2. In terms of tissue distribution, widely expressed. Highly expressed in skeletal muscle and ovary. Expressed at intermediate level in heart, brain, liver, pancreas, prostate and small intestine. Weakly expressed in testis, colon and leukocyte.

The protein resides in the membrane. It localises to the coated pit. Its function is as follows. Probable receptor, which may be involved in the internalization of lipophilic molecules and/or signal transduction. Its precise role is however unclear, since it does not bind to very low density lipoprotein (VLDL) or to LRPAP1 in vitro. In Homo sapiens (Human), this protein is Low-density lipoprotein receptor-related protein 3 (LRP3).